Here is a 1274-residue protein sequence, read N- to C-terminus: VWFA and cache domain-containing protein 1 (1274 aa).

Positions 1–35 (MARQPEEEETAVARARRPPLWLLCLVACWLLGAGA) are cleaved as a signal peptide. Over 36 to 1095 (EADFSILDEA…ITLNMIKSAP (1060 aa)) the chain is Extracellular. N-linked (GlcNAc...) asparagine glycosylation is present at Asn145. A VWFA domain is found at 228–443 (HIVVILDHGA…TTVGRFYTNL (216 aa)). Cache domains are found at residues 453-532 (FSLP…SEPP) and 772-853 (LTGP…HPTL). The helical transmembrane segment at 1096-1116 (VGPVAGGIMGCIMVLVLAVYA) threads the bilayer. Residues 1117 to 1274 (YRHQIHRRSH…VTVHTVDAEC (158 aa)) are Cytoplasmic-facing. The segment at 1179 to 1227 (PERRRRYWGRSGTESDHGYSTMSPQEDSENPPCNNDPLSAGVDVGNHDE) is disordered. Polar residues predominate over residues 1196-1215 (GYSTMSPQEDSENPPCNNDP).

The protein belongs to the calcium channel subunit alpha-2/delta family.

It localises to the membrane. Functionally, may regulate voltage-dependent calcium channels. The sequence is that of VWFA and cache domain-containing protein 1 (CACHD1) from Homo sapiens (Human).